The chain runs to 144 residues: Large ribosomal subunit protein uL16 (144 aa).

Residues 1 to 19 (MLLPKRVKYRRQHRPKTTG) show a composition bias toward basic residues. Residues 1–26 (MLLPKRVKYRRQHRPKTTGRSKGGNE) are disordered.

This sequence belongs to the universal ribosomal protein uL16 family. Part of the 50S ribosomal subunit.

In terms of biological role, binds 23S rRNA and is also seen to make contacts with the A and possibly P site tRNAs. This is Large ribosomal subunit protein uL16 from Macrococcus caseolyticus (strain JCSC5402) (Macrococcoides caseolyticum).